The chain runs to 88 residues: Histone H2A-beta, sperm (88 aa).

This sequence belongs to the histone H2A family. As to quaternary structure, the nucleosome is a histone octamer containing two molecules each of H2A, H2B, H3 and H4 assembled in one H3-H4 heterotetramer and two H2A-H2B heterodimers. The octamer wraps approximately 147 bp of DNA. In terms of processing, monoubiquitination in C-terminus gives a specific tag for epigenetic transcriptional repression.

The protein resides in the nucleus. Its subcellular location is the chromosome. Its function is as follows. Core component of nucleosome. Nucleosomes wrap and compact DNA into chromatin, limiting DNA accessibility to the cellular machineries which require DNA as a template. Histones thereby play a central role in transcription regulation, DNA repair, DNA replication and chromosomal stability. DNA accessibility is regulated via a complex set of post-translational modifications of histones, also called histone code, and nucleosome remodeling. The protein is Histone H2A-beta, sperm of Strongylocentrotus purpuratus (Purple sea urchin).